The sequence spans 1604 residues: Calmodulin-regulated spectrin-associated protein 1 (1604 aa).

Position 216 is a phosphoserine (S216). The Calponin-homology (CH) domain occupies 235–350; the sequence is PVDFARVVRY…FIAELFWWFE (116 aa). Phosphoserine occurs at positions 390, 394, and 435. The segment at 394–413 is disordered; that stretch reads SPAAMSPADLPPSTQPLTEG. The tract at residues 444–491 is disordered; the sequence is RQKQQKVSQAEEIPDQRHRSNSLTRADGQPRGAAIAWPDKKNRPVSQP. Phosphothreonine is present on T531. Phosphoserine occurs at positions 571, 574, 581, 593, 607, 647, 739, 745, 755, and 757. The segment at 642–671 is disordered; it reads MAKRPSEGSQPLVRKKVTGSHGSRDLNRTF. Residues 784 to 806 are compositionally biased toward basic and acidic residues; sequence EEESAKLQEDMKVKEHEDKDDAS. Disordered stretches follow at residues 784 to 824 and 842 to 888; these read EEES…SMSM and LNSC…KDPA. Low complexity-rich tracts occupy residues 813 to 824 and 847 to 858; these read LSTTSQLSSMSM and TKSSTSSSQKTT. Positions 874-886 are enriched in basic and acidic residues; sequence QKREQSPSRHSKD. The interval 888 to 909 is sufficient for interaction with SPTBN1; it reads ASLLASELVQLHMQLEEKRRAI. Coiled coils occupy residues 890-926 and 1026-1058; these read LLAS…QRLK and DVNE…QEQL. Residues 920–939 are sufficient for interaction with calmodulin; it reads SARQRLKLGKAAFLHVVKKG. 3 disordered regions span residues 1085–1163, 1246–1271, and 1298–1448; these read FVEP…GELP, PDED…KPGV, and RKAE…DRDW. S1090 is modified (phosphoserine). The span at 1113-1124 shows a compositional bias: basic and acidic residues; sequence RPAELKVPKDRQ. Positions 1125 to 1137 are enriched in polar residues; sequence QGCSRSKTPTPSV. S1154 carries the post-translational modification Phosphoserine. Composition is skewed to basic and acidic residues over residues 1246–1258 and 1298–1348; these read PDED…HESS and RKAE…EYLR. Residues 1286–1357 are a coiled coil; the sequence is AKKRAAFLLK…RRKQQQALEE (72 aa). The segment covering 1363-1374 has biased composition (basic residues); that stretch reads PKSKPKKPRPKS. The segment covering 1382-1394 has biased composition (polar residues); sequence SDSGTKCSSTPDN. Residues 1395-1412 are compositionally biased toward low complexity; that stretch reads LSQTHSGSSLSLASAATT. Residues S1400 and S1429 each carry the phosphoserine modification. The CKK domain occupies 1465 to 1599; sequence GPKLFKEPSS…QPKRPTVPKK (135 aa). A Phosphotyrosine modification is found at Y1539.

It belongs to the CAMSAP1 family. In terms of assembly, interacts with spectrin via SPTBN1; the interaction is direct. Interacts with calmodulin; calcium-dependent it prevents interaction with spectrin. As to expression, in brain, specifically expressed in astrocytes (at protein level).

It localises to the cytoplasm. Its subcellular location is the cytoskeleton. Key microtubule-organizing protein that specifically binds the minus-end of non-centrosomal microtubules and regulates their dynamics and organization. Specifically recognizes growing microtubule minus-ends and stabilizes microtubules. Acts on free microtubule minus-ends that are not capped by microtubule-nucleating proteins or other factors and protects microtubule minus-ends from depolymerization. In contrast to CAMSAP2 and CAMSAP3, tracks along the growing tips of minus-end microtubules without significantly affecting the polymerization rate: binds at the very tip of the microtubules minus-end and acts as a minus-end tracking protein (-TIP) that dissociates from microtubules after allowing tubulin incorporation. Through interaction with spectrin may regulate neurite outgrowth. This is Calmodulin-regulated spectrin-associated protein 1 (Camsap1) from Rattus norvegicus (Rat).